Consider the following 396-residue polypeptide: Subtilisin-like protease 5 (396 aa).

Residues Met1–Ala20 form the signal peptide. A propeptide spanning residues Ala21–His116 is cleaved from the precursor. In terms of domain architecture, Inhibitor I9 spans Tyr37–Ile113. Asn63 is a glycosylation site (N-linked (GlcNAc...) asparagine). The Peptidase S8 domain occupies Pro125–Arg396. Active-site charge relay system residues include Asp156 and His187. 2 N-linked (GlcNAc...) asparagine glycosylation sites follow: Asn230 and Asn248. The active-site Charge relay system is Ser342. The span at Pro376–Leu389 shows a compositional bias: polar residues. Residues Pro376–Arg396 are disordered. The N-linked (GlcNAc...) asparagine glycan is linked to Asn392.

It belongs to the peptidase S8 family.

It localises to the secreted. In terms of biological role, secreted subtilisin-like serine protease with keratinolytic activity that contributes to pathogenicity. The protein is Subtilisin-like protease 5 (SUB5) of Trichophyton verrucosum (Cattle ringworm fungus).